We begin with the raw amino-acid sequence, 401 residues long: Acetate kinase (401 aa).

Asparagine 9 provides a ligand contact to Mg(2+). An ATP-binding site is contributed by lysine 16. Arginine 88 is a substrate binding site. Aspartate 147 acts as the Proton donor/acceptor in catalysis. Residues 207 to 211, 282 to 284, and 333 to 337 each bind ATP; these read HLGNG, DCR, and GIGEN. Glutamate 388 lines the Mg(2+) pocket.

The protein belongs to the acetokinase family. Homodimer. It depends on Mg(2+) as a cofactor. Mn(2+) serves as cofactor.

The protein resides in the cytoplasm. The enzyme catalyses acetate + ATP = acetyl phosphate + ADP. Its pathway is metabolic intermediate biosynthesis; acetyl-CoA biosynthesis; acetyl-CoA from acetate: step 1/2. Its function is as follows. Catalyzes the formation of acetyl phosphate from acetate and ATP. Can also catalyze the reverse reaction. In Haemophilus influenzae (strain 86-028NP), this protein is Acetate kinase.